The primary structure comprises 77 residues: Putative neurotoxin 1 (77 aa).

The first 25 residues, Met1–Ala25, serve as a signal peptide directing secretion. The propeptide occupies Lys26–Lys46.

This sequence belongs to the scolopendra neurotoxin 3 family. In terms of processing, contains 2 disulfide bonds. As to expression, expressed by the venom gland.

The protein resides in the secreted. The protein is Putative neurotoxin 1 of Scolopendra subspinipes (Vietnamese centipede).